A 717-amino-acid chain; its full sequence is DNA ligase (717 aa).

NAD(+) contacts are provided by residues 44 to 48 (DADYD), 93 to 94 (SL), and glutamate 127. The active-site N6-AMP-lysine intermediate is lysine 129. NAD(+) contacts are provided by arginine 150, glutamate 186, lysine 302, and lysine 326. Residues cysteine 431, cysteine 434, cysteine 455, and cysteine 461 each coordinate Zn(2+). The BRCT domain occupies 639–717 (STDSPVAGKT…EDEWLALIGG (79 aa)).

Belongs to the NAD-dependent DNA ligase family. LigA subfamily. It depends on Mg(2+) as a cofactor. The cofactor is Mn(2+).

The enzyme catalyses NAD(+) + (deoxyribonucleotide)n-3'-hydroxyl + 5'-phospho-(deoxyribonucleotide)m = (deoxyribonucleotide)n+m + AMP + beta-nicotinamide D-nucleotide.. DNA ligase that catalyzes the formation of phosphodiester linkages between 5'-phosphoryl and 3'-hydroxyl groups in double-stranded DNA using NAD as a coenzyme and as the energy source for the reaction. It is essential for DNA replication and repair of damaged DNA. The sequence is that of DNA ligase from Sinorhizobium fredii (strain NBRC 101917 / NGR234).